We begin with the raw amino-acid sequence, 615 residues long: Alpha-1,3-galactosidase B (615 aa).

The N-terminal stretch at 1-23 (MRTFLSLKTCLLSALLLCVNSIA) is a signal peptide. 6 PbH1 repeats span residues 282 to 313 (SKNISFNDVHIIPNTSKKRVLSGHDDGFHFMG), 423 to 445 (TPDAEIRNCHFGSCRARGLLVST), 446 to 467 (PGKVIIENNVFESSGSAILIAG), 478 to 500 (VKDVLIRNNDFRYPCNSSIYQFC), 520 to 541 (HRNIRIMDNTFHLFDYPILFAR), and 543 to 573 (VNGLTFSSNTLIRDTTYQPYHYRKEGITLEA).

It belongs to the glycosyl hydrolase 110 family. B subfamily.

The enzyme catalyses Hydrolysis of terminal, non-reducing branched (1-&gt;3)-alpha-D-galactosidic residues, producing free D-galactose.. The catalysed reaction is Hydrolysis of terminal, non-reducing linear (1-&gt;3)-alpha-D-galactosidic residues, producing free D-galactose.. It catalyses the reaction Hydrolysis of terminal, non-reducing alpha-D-galactose residues in alpha-D-galactosides, including galactose oligosaccharides, galactomannans and galactolipids.. In terms of biological role, alpha-galactosidase. Removes both branched alpha-1,3-linked galactose residues of blood group B antigens and linear alpha-1,3-linked galactose structures. The protein is Alpha-1,3-galactosidase B (glaB) of Bacteroides thetaiotaomicron (strain ATCC 29148 / DSM 2079 / JCM 5827 / CCUG 10774 / NCTC 10582 / VPI-5482 / E50).